Consider the following 395-residue polypeptide: G-protein coupled receptor 182 (395 aa).

The Extracellular segment spans residues 1–53 (MSVIPSPRPVSTLEPDNDFRDIHNWTELLHLFNQTFTDCHIEFNENTKHVVLF). Asn-24 and Asn-33 each carry an N-linked (GlcNAc...) asparagine glycan. Residues 54–75 (VFYLAIFVVGLVENVLVICVNC) form a helical membrane-spanning segment. At 76-86 (RRSGRVGMLNL) the chain is on the cytoplasmic side. The chain crosses the membrane as a helical span at residues 87–109 (YILNMAIADLGIILSLPVWMLEV). Residues 110–123 (MLEYTWLWGSFSCR) lie on the Extracellular side of the membrane. Cys-122 and Cys-198 are joined by a disulfide. A helical transmembrane segment spans residues 124–145 (FIHYFYLVNMYSSIFFLTCLSI). At 146–166 (DRYVTLTNTSPSWQRHQHRIR) the chain is on the cytoplasmic side. Residues 167–189 (RAVCAGVWVLSAIIPLPEVVHIQ) form a helical membrane-spanning segment. At 190-213 (LLDGSEPMCLFLAPFETYSAWALA) the chain is on the extracellular side. Residues 214–235 (VALSATILGFLLPFLLIAVFNI) form a helical membrane-spanning segment. Residues 236 to 254 (LTACRLRRQRQTESRRHCL) lie on the Cytoplasmic side of the membrane. Residues 255–276 (LMWAYIVVFAICWLPYQVTMLL) traverse the membrane as a helical segment. The Extracellular portion of the chain corresponds to 277–295 (LTLHGTHIFLHCHLVNLLY). The helical transmembrane segment at 296-316 (FFYEIIDCFSMLHCVANPILY) threads the bilayer. Topologically, residues 317-395 (NFLSPSFRGR…QTPHLHSAIL (79 aa)) are cytoplasmic. Position 329 is a phosphoserine (Ser-329).

Belongs to the G-protein coupled receptor 1 family. In terms of tissue distribution, expressed in liver and lung.

It localises to the cell membrane. In terms of biological role, orphan receptor. This Mus musculus (Mouse) protein is G-protein coupled receptor 182 (Gpr182).